The chain runs to 636 residues: DNA gyrase subunit B (636 aa).

The Toprim domain occupies 421–535 (TELFIVEGDS…QGRVYIALPP (115 aa)). Residues Glu-427, Asp-500, and Asp-502 each contribute to the Mg(2+) site.

Belongs to the type II topoisomerase GyrB family. Heterotetramer, composed of two GyrA and two GyrB chains. In the heterotetramer, GyrA contains the active site tyrosine that forms a transient covalent intermediate with DNA, while GyrB binds cofactors and catalyzes ATP hydrolysis. Requires Mg(2+) as cofactor. Mn(2+) is required as a cofactor. It depends on Ca(2+) as a cofactor.

Its subcellular location is the cytoplasm. It catalyses the reaction ATP-dependent breakage, passage and rejoining of double-stranded DNA.. Its function is as follows. A type II topoisomerase that negatively supercoils closed circular double-stranded (ds) DNA in an ATP-dependent manner to modulate DNA topology and maintain chromosomes in an underwound state. Negative supercoiling favors strand separation, and DNA replication, transcription, recombination and repair, all of which involve strand separation. Also able to catalyze the interconversion of other topological isomers of dsDNA rings, including catenanes and knotted rings. Type II topoisomerases break and join 2 DNA strands simultaneously in an ATP-dependent manner. This is DNA gyrase subunit B from Thermotoga maritima (strain ATCC 43589 / DSM 3109 / JCM 10099 / NBRC 100826 / MSB8).